Consider the following 966-residue polypeptide: Glycine dehydrogenase (decarboxylating) (966 aa).

An N6-(pyridoxal phosphate)lysine modification is found at K713.

The protein belongs to the GcvP family. In terms of assembly, the glycine cleavage system is composed of four proteins: P, T, L and H. The cofactor is pyridoxal 5'-phosphate.

It catalyses the reaction N(6)-[(R)-lipoyl]-L-lysyl-[glycine-cleavage complex H protein] + glycine + H(+) = N(6)-[(R)-S(8)-aminomethyldihydrolipoyl]-L-lysyl-[glycine-cleavage complex H protein] + CO2. Its function is as follows. The glycine cleavage system catalyzes the degradation of glycine. The P protein binds the alpha-amino group of glycine through its pyridoxal phosphate cofactor; CO(2) is released and the remaining methylamine moiety is then transferred to the lipoamide cofactor of the H protein. This chain is Glycine dehydrogenase (decarboxylating), found in Shewanella halifaxensis (strain HAW-EB4).